Reading from the N-terminus, the 109-residue chain is MGIDMSEEKEVKEIKVEIPKEIADKIEKITSFLNSLKDKKEMVSKEKIEEMLKLIDEVKDKLPKLNVDIEKLAKILEGSGSEVKIVFNKLTIDGEVGLKIIPLKKEKKE.

It to A.fulgidus AF1885.

This is an uncharacterized protein from Methanocaldococcus jannaschii (strain ATCC 43067 / DSM 2661 / JAL-1 / JCM 10045 / NBRC 100440) (Methanococcus jannaschii).